A 271-amino-acid chain; its full sequence is ATP synthase subunit a (271 aa).

5 consecutive transmembrane segments (helical) span residues 47–67, 107–127, 133–153, 209–229, and 235–255; these read WENI…AYLG, FLGT…VPLM, SLNI…FLNI, ILIG…ETFV, and LPFM…FTLL.

The protein belongs to the ATPase A chain family. In terms of assembly, F-type ATPases have 2 components, CF(1) - the catalytic core - and CF(0) - the membrane proton channel. CF(1) has five subunits: alpha(3), beta(3), gamma(1), delta(1), epsilon(1). CF(0) has three main subunits: a(1), b(2) and c(9-12). The alpha and beta chains form an alternating ring which encloses part of the gamma chain. CF(1) is attached to CF(0) by a central stalk formed by the gamma and epsilon chains, while a peripheral stalk is formed by the delta and b chains.

The protein localises to the cell inner membrane. Functionally, key component of the proton channel; it plays a direct role in the translocation of protons across the membrane. The chain is ATP synthase subunit a from Protochlamydia amoebophila (strain UWE25).